The chain runs to 223 residues: Adenylate kinase (223 aa).

17–22 (GAGKGT) contributes to the ATP binding site. The interval 37–66 (STGDMLRSQVAKGTPLGVEAKKIMDQGGLV) is NMP. Residues Thr38, Arg43, 64–66 (GLV), 93–96 (GFPR), and Gln100 contribute to the AMP site. Residues 134 to 171 (GRLVHPSSGRSYHKLFNPPKVEMTDDVTGEPLVQRSDD) form an LID region. ATP-binding positions include Arg135 and 144–145 (SY). AMP-binding residues include Arg168 and Arg179. An ATP-binding site is contributed by Gln207.

The protein belongs to the adenylate kinase family. AK2 subfamily. In terms of assembly, monomer.

It localises to the cytoplasm. It is found in the cytosol. Its subcellular location is the mitochondrion intermembrane space. It carries out the reaction AMP + ATP = 2 ADP. Functionally, catalyzes the reversible transfer of the terminal phosphate group between ATP and AMP. Plays an important role in cellular energy homeostasis and in adenine nucleotide metabolism. Adenylate kinase activity is critical for regulation of the phosphate utilization and the AMP de novo biosynthesis pathways. This Vanderwaltozyma polyspora (strain ATCC 22028 / DSM 70294 / BCRC 21397 / CBS 2163 / NBRC 10782 / NRRL Y-8283 / UCD 57-17) (Kluyveromyces polysporus) protein is Adenylate kinase.